A 627-amino-acid polypeptide reads, in one-letter code: uncharacterized protein (627 aa).

The Extracellular portion of the chain corresponds to Met1 to Leu32. The chain crosses the membrane as a helical span at residues Leu33–Val53. Over Tyr54–Gly66 the chain is Cytoplasmic. Residues Ile67–Gly87 form a helical membrane-spanning segment. Over Ala88–Met113 the chain is Extracellular. The chain crosses the membrane as a helical span at residues Ile114–Phe134. At Gly135–Thr165 the chain is on the cytoplasmic side. A helical membrane pass occupies residues Phe166–Ala186. Residues Lys187–Lys192 lie on the Extracellular side of the membrane. Residues Phe193–Gly213 traverse the membrane as a helical segment. At Asp214–Ser218 the chain is on the cytoplasmic side. The chain crosses the membrane as a helical span at residues Phe219–Ile239. The Extracellular segment spans residues Pro240 to Asn245. A helical transmembrane segment spans residues Ile246–Glu266. Over Arg267 to Leu627 the chain is Cytoplasmic. Residue Thr305 is modified to Phosphothreonine. A disordered region spans residues Pro512–Asp537. Polar residues predominate over residues Arg517–Ala533. Residue Ser546 is modified to Phosphoserine. A Phosphothreonine modification is found at Thr588. Residues Ser605–Glu614 are compositionally biased toward basic and acidic residues. The interval Ser605–Leu627 is disordered.

Belongs to the FNT transporter (TC 1.A.16) family.

It localises to the membrane. This is an uncharacterized protein from Saccharomyces cerevisiae (strain ATCC 204508 / S288c) (Baker's yeast).